We begin with the raw amino-acid sequence, 317 residues long: Putative HTH-type transcriptional regulatory protein Mboo_0195 (317 aa).

The region spanning 132 to 185 is the HTH cro/C1-type domain; the sequence is LRELRERRSMSLGDLGQVLGVSRRTISKYESGMGTTLEVAIRIEEYFNTGVVES. The H-T-H motif DNA-binding region spans 143–162; that stretch reads LGDLGQVLGVSRRTISKYES.

The chain is Putative HTH-type transcriptional regulatory protein Mboo_0195 from Methanoregula boonei (strain DSM 21154 / JCM 14090 / 6A8).